Reading from the N-terminus, the 174-residue chain is Neuromedin-U (174 aa).

The signal sequence occupies residues 1–37 (MSRAANRRPGLSAGQLAAATASPLLSLLLLLACCADA). The propeptide occupies 38 to 105 (CRGTPISPQR…EQTEKDNAKR (68 aa)). The residue at position 141 (Met-141) is a Methionine sulfoxide; partial. Asn-166 bears the Asparagine amide mark. Residues 170–174 (STSFI) constitute a propeptide that is removed on maturation.

This sequence belongs to the NmU family. Expressed throughout the gastrointestinal tract with highest levels in the duodenum and jejunum. Low levels in spinal cord, hypothalamus, and stomach. Neuromedin-U-23: Expressed in the small intestine and the pituitary gland (at protein level). Neuromedin precursor-related peptides: Expressed in pituitary gland and small intestine (at protein level).

The protein resides in the secreted. Functionally, ligand for receptors NMUR1 and NMUR2. Receptor-binding is very tight if not irreversible and triggers an increase in the cytosolic Ca(2+) concentration. Stimulates muscle contractions of specific regions of the gastrointestinal tract. In rat, NMU stimulates contractions of stomach circular muscle. In terms of biological role, does not function as a ligand for either NMUR1 or NMUR2. Indirectly induces prolactin release although its potency is much lower than that of neuromedin precursor-related peptide 36. Its function is as follows. Does not function as a ligand for either NMUR1 or NMUR2. Indirectly induces prolactin release from lactotroph cells in the pituitary gland, probably via the hypothalamic dopaminergic system. In Rattus norvegicus (Rat), this protein is Neuromedin-U (Nmu).